Reading from the N-terminus, the 593-residue chain is MLO-like protein 8 (593 aa).

Residues 1–46 lie on the Extracellular side of the membrane; sequence MGIIDGSLLRRLICLCLWCLLGGGVTVVTAEDEKKVVHKQLNQTPT. The helical transmembrane segment at 47-67 threads the bilayer; that stretch reads WAVAAVCTFFIVVSVLLEKLL. The Cytoplasmic portion of the chain corresponds to 68–92; the sequence is HKVGKVLWDRHKTALLDALEKIKAE. The chain crosses the membrane as a helical span at residues 93 to 113; sequence LMVLGFISLLLTFGQTYILDI. At 114–181 the chain is on the extracellular side; sequence CIPSHVARTM…ISAEALHQLH (68 aa). The chain crosses the membrane as a helical span at residues 182–202; sequence ILIFFLAIFHVLYSFLTMMLG. Topologically, residues 203-304 are cytoplasmic; it reads RLKIRGWKHW…IKRSLEDDFK (102 aa). A helical membrane pass occupies residues 305-325; it reads VVVGVSPVLWGSFVLFLLLNI. A topological domain (extracellular) is located at residue aspartate 326. Residues 327-347 form a helical membrane-spanning segment; that stretch reads GFKMMFIGTAIPVIIILAVGT. The Cytoplasmic segment spans residues 348 to 393; it reads KLQAIMTRMALGITDRHAVVQGMPLVQGNDEYFWFGRPHLILHLMH. A helical membrane pass occupies residues 394–414; that stretch reads FALFQNAFQITYFFWIWYSFG. Residues 415–430 are Extracellular-facing; that stretch reads SDSCYHPNFKIALVKV. Residues 431–451 form a helical membrane-spanning segment; it reads AIALGVLCLCSYITLPLYALV. The Cytoplasmic portion of the chain corresponds to 452-593; sequence TQMGSRMKKS…APSNESSQDR (142 aa). A calmodulin-binding region spans residues 465-486; sequence EQTSKALKKWRMAVKKKKGVKA. Residues 481-593 form a disordered region; the sequence is KKGVKATTKR…APSNESSQDR (113 aa). Residues 489–512 show a composition bias toward low complexity; it reads KRLGGDGSASPTASTVRSTSSVRS. A compositionally biased stretch (acidic residues) spans 528–539; that stretch reads LDPETSDLDTDN. A compositionally biased stretch (basic and acidic residues) spans 567–579; it reads TSRDTETDSKEFS.

This sequence belongs to the MLO family.

The protein resides in the membrane. May be involved in modulation of pathogen defense and leaf cell death. Activity seems to be regulated by Ca(2+)-dependent calmodulin binding and seems not to require heterotrimeric G proteins. This Arabidopsis thaliana (Mouse-ear cress) protein is MLO-like protein 8 (MLO8).